The chain runs to 558 residues: Formate--tetrahydrofolate ligase (558 aa).

66–73 (TPAGEGKT) is a binding site for ATP.

Belongs to the formate--tetrahydrofolate ligase family.

It carries out the reaction (6S)-5,6,7,8-tetrahydrofolate + formate + ATP = (6R)-10-formyltetrahydrofolate + ADP + phosphate. The protein operates within one-carbon metabolism; tetrahydrofolate interconversion. In Neisseria meningitidis serogroup A / serotype 4A (strain DSM 15465 / Z2491), this protein is Formate--tetrahydrofolate ligase.